Consider the following 439-residue polypeptide: Methylenetetrahydrofolate--tRNA-(uracil-5-)-methyltransferase TrmFO (439 aa).

Gly-8–Gly-13 contributes to the FAD binding site.

This sequence belongs to the MnmG family. TrmFO subfamily. FAD is required as a cofactor.

The protein resides in the cytoplasm. It catalyses the reaction uridine(54) in tRNA + (6R)-5,10-methylene-5,6,7,8-tetrahydrofolate + NADH + H(+) = 5-methyluridine(54) in tRNA + (6S)-5,6,7,8-tetrahydrofolate + NAD(+). The catalysed reaction is uridine(54) in tRNA + (6R)-5,10-methylene-5,6,7,8-tetrahydrofolate + NADPH + H(+) = 5-methyluridine(54) in tRNA + (6S)-5,6,7,8-tetrahydrofolate + NADP(+). Functionally, catalyzes the folate-dependent formation of 5-methyl-uridine at position 54 (M-5-U54) in all tRNAs. This chain is Methylenetetrahydrofolate--tRNA-(uracil-5-)-methyltransferase TrmFO, found in Dictyoglomus turgidum (strain DSM 6724 / Z-1310).